We begin with the raw amino-acid sequence, 164 residues long: Crossover junction endodeoxyribonuclease RuvC (164 aa).

Residues D7, E66, and D138 contribute to the active site. D7, E66, and D138 together coordinate Mg(2+).

Belongs to the RuvC family. Homodimer which binds Holliday junction (HJ) DNA. The HJ becomes 2-fold symmetrical on binding to RuvC with unstacked arms; it has a different conformation from HJ DNA in complex with RuvA. In the full resolvosome a probable DNA-RuvA(4)-RuvB(12)-RuvC(2) complex forms which resolves the HJ. Mg(2+) serves as cofactor.

It localises to the cytoplasm. It carries out the reaction Endonucleolytic cleavage at a junction such as a reciprocal single-stranded crossover between two homologous DNA duplexes (Holliday junction).. In terms of biological role, the RuvA-RuvB-RuvC complex processes Holliday junction (HJ) DNA during genetic recombination and DNA repair. Endonuclease that resolves HJ intermediates. Cleaves cruciform DNA by making single-stranded nicks across the HJ at symmetrical positions within the homologous arms, yielding a 5'-phosphate and a 3'-hydroxyl group; requires a central core of homology in the junction. The consensus cleavage sequence is 5'-(A/T)TT(C/G)-3'. Cleavage occurs on the 3'-side of the TT dinucleotide at the point of strand exchange. HJ branch migration catalyzed by RuvA-RuvB allows RuvC to scan DNA until it finds its consensus sequence, where it cleaves and resolves the cruciform DNA. This Paracoccus denitrificans (strain Pd 1222) protein is Crossover junction endodeoxyribonuclease RuvC.